The chain runs to 104 residues: Large ribosomal subunit protein uL24 (104 aa).

This sequence belongs to the universal ribosomal protein uL24 family. Part of the 50S ribosomal subunit.

Functionally, one of two assembly initiator proteins, it binds directly to the 5'-end of the 23S rRNA, where it nucleates assembly of the 50S subunit. In terms of biological role, one of the proteins that surrounds the polypeptide exit tunnel on the outside of the subunit. The sequence is that of Large ribosomal subunit protein uL24 from Flavobacterium psychrophilum (strain ATCC 49511 / DSM 21280 / CIP 103535 / JIP02/86).